A 244-amino-acid chain; its full sequence is 1-(5-phosphoribosyl)-5-[(5-phosphoribosylamino)methylideneamino] imidazole-4-carboxamide isomerase (244 aa).

Asp13 acts as the Proton acceptor in catalysis. The active-site Proton donor is the Asp132.

It belongs to the HisA/HisF family.

Its subcellular location is the cytoplasm. The catalysed reaction is 1-(5-phospho-beta-D-ribosyl)-5-[(5-phospho-beta-D-ribosylamino)methylideneamino]imidazole-4-carboxamide = 5-[(5-phospho-1-deoxy-D-ribulos-1-ylimino)methylamino]-1-(5-phospho-beta-D-ribosyl)imidazole-4-carboxamide. Its pathway is amino-acid biosynthesis; L-histidine biosynthesis; L-histidine from 5-phospho-alpha-D-ribose 1-diphosphate: step 4/9. This Renibacterium salmoninarum (strain ATCC 33209 / DSM 20767 / JCM 11484 / NBRC 15589 / NCIMB 2235) protein is 1-(5-phosphoribosyl)-5-[(5-phosphoribosylamino)methylideneamino] imidazole-4-carboxamide isomerase.